Here is a 271-residue protein sequence, read N- to C-terminus: ATP synthase subunit delta (271 aa).

This sequence belongs to the ATPase delta chain family. In terms of assembly, F-type ATPases have 2 components, F(1) - the catalytic core - and F(0) - the membrane proton channel. F(1) has five subunits: alpha(3), beta(3), gamma(1), delta(1), epsilon(1). F(0) has three main subunits: a(1), b(2) and c(10-14). The alpha and beta chains form an alternating ring which encloses part of the gamma chain. F(1) is attached to F(0) by a central stalk formed by the gamma and epsilon chains, while a peripheral stalk is formed by the delta and b chains.

It localises to the cell membrane. In terms of biological role, f(1)F(0) ATP synthase produces ATP from ADP in the presence of a proton or sodium gradient. F-type ATPases consist of two structural domains, F(1) containing the extramembraneous catalytic core and F(0) containing the membrane proton channel, linked together by a central stalk and a peripheral stalk. During catalysis, ATP synthesis in the catalytic domain of F(1) is coupled via a rotary mechanism of the central stalk subunits to proton translocation. This protein is part of the stalk that links CF(0) to CF(1). It either transmits conformational changes from CF(0) to CF(1) or is implicated in proton conduction. The sequence is that of ATP synthase subunit delta from Corynebacterium kroppenstedtii (strain DSM 44385 / JCM 11950 / CIP 105744 / CCUG 35717).